Here is a 440-residue protein sequence, read N- to C-terminus: Sorting nexin-31 (440 aa).

Positions 1–109 (MKMHFCIPVS…EFLKLAQLNT (109 aa)) constitute a PX domain.

It belongs to the sorting nexin family. In terms of assembly, interacts with CCDC22, CCDC93, VPS26C and VPS35L, associates with the retriever and CCC complexes.

In terms of biological role, may be involved in protein trafficking. In Homo sapiens (Human), this protein is Sorting nexin-31 (SNX31).